Consider the following 177-residue polypeptide: ATP synthase subunit delta (177 aa).

Belongs to the ATPase delta chain family. As to quaternary structure, F-type ATPases have 2 components, F(1) - the catalytic core - and F(0) - the membrane proton channel. F(1) has five subunits: alpha(3), beta(3), gamma(1), delta(1), epsilon(1). F(0) has three main subunits: a(1), b(2) and c(10-14). The alpha and beta chains form an alternating ring which encloses part of the gamma chain. F(1) is attached to F(0) by a central stalk formed by the gamma and epsilon chains, while a peripheral stalk is formed by the delta and b chains.

The protein localises to the cell membrane. F(1)F(0) ATP synthase produces ATP from ADP in the presence of a proton or sodium gradient. F-type ATPases consist of two structural domains, F(1) containing the extramembraneous catalytic core and F(0) containing the membrane proton channel, linked together by a central stalk and a peripheral stalk. During catalysis, ATP synthesis in the catalytic domain of F(1) is coupled via a rotary mechanism of the central stalk subunits to proton translocation. Functionally, this protein is part of the stalk that links CF(0) to CF(1). It either transmits conformational changes from CF(0) to CF(1) or is implicated in proton conduction. The sequence is that of ATP synthase subunit delta from Caldanaerobacter subterraneus subsp. tengcongensis (strain DSM 15242 / JCM 11007 / NBRC 100824 / MB4) (Thermoanaerobacter tengcongensis).